The primary structure comprises 227 residues: Mitochondrial inner membrane protease ATP23 (227 aa).

Residue histidine 124 participates in a divalent metal cation binding. The active site involves glutamate 125. Position 128 (histidine 128) interacts with a divalent metal cation.

It belongs to the peptidase M76 family. Interacts with ATP6.

The protein resides in the mitochondrion inner membrane. Its function is as follows. Has a dual role in the assembly of mitochondrial ATPase. Acts as a protease that removes the N-terminal 10 residues of mitochondrial ATPase CF(0) subunit 6 (ATP6) at the intermembrane space side. Also involved in the correct assembly of the membrane-embedded ATPase CF(0) particle, probably mediating association of ATP6 with the subunit 9 ring. This is Mitochondrial inner membrane protease ATP23 (ATP23) from Saccharomyces cerevisiae (strain Lalvin EC1118 / Prise de mousse) (Baker's yeast).